An 881-amino-acid chain; its full sequence is Serine/threonine-protein kinase/endoribonuclease IRE1b (881 aa).

The signal sequence occupies residues 1–21 (MRGSALLDLILFLLVSPLAHS). Residues 22-357 (FKGSEISKFY…KQAGFASKFS (336 aa)) are Lumenal-facing. A glycan (N-linked (GlcNAc...) asparagine) is linked at N115. A helical membrane pass occupies residues 358-378 (GLIVLIFGFCVTMLSVCGLFF). At 379-881 (YRLRQSIRIK…FFKYSKTTVF (503 aa)) the chain is on the cytoplasmic side. Positions 459–744 (FVSNKEIAKG…AQDVMHHPLF (286 aa)) constitute a Protein kinase domain. Residues 465–473 (IAKGSNGTV) and K487 contribute to the ATP site. The tract at residues 481–502 (GRLVAVKRLVQSHHDVAQKEIL) is ATP selon article. Catalysis depends on D608, which acts as the Proton acceptor. The tract at residues 642 to 661 (LTRNSTGLGSGSSGWQAPEQ) is disordered. The 132-residue stretch at 747-878 (SDMRLSFLRD…EEFFFKYSKT (132 aa)) folds into the KEN domain.

This sequence belongs to the protein kinase superfamily. Ser/Thr protein kinase family. Homodimer; disulfide-linked. Dimer formation is driven by hydrophobic interactions within the N-terminal luminal domains and stabilized by disulfide bridges. It depends on Mg(2+) as a cofactor. In terms of processing, autophosphorylated. As to expression, ubiquitous. Detected in the apical meristem, at leaf margins where vascular bundles end, in the anthers before pollen is formed and in the ovules at a very early stage of development. There is no expression in more mature embryos. Also strongly expressed in the cotyledons immediately after germination but not later on.

The protein resides in the endoplasmic reticulum membrane. It catalyses the reaction L-seryl-[protein] + ATP = O-phospho-L-seryl-[protein] + ADP + H(+). The catalysed reaction is L-threonyl-[protein] + ATP = O-phospho-L-threonyl-[protein] + ADP + H(+). Its activity is regulated as follows. The kinase domain is activated by trans-autophosphorylation. Kinase activity is required for activation of the endoribonuclease domain. Functionally, senses unfolded proteins in the lumen of the endoplasmic reticulum via its N-terminal domain which leads to enzyme auto-activation. The active endoribonuclease domain splices bZIP60 mRNA to generate a new C-terminus, converting it into a potent unfolded-protein response transcriptional activator which then induces transcription of UPR target genes. Involved in organ growth regulation. Plays a role in plant immunity and abiotic stress responses. Required for ER stress-induced autophagy. The polypeptide is Serine/threonine-protein kinase/endoribonuclease IRE1b (IRE1B) (Arabidopsis thaliana (Mouse-ear cress)).